A 395-amino-acid polypeptide reads, in one-letter code: S-adenosylmethionine synthase (395 aa).

Residue H16 participates in ATP binding. Residue D18 coordinates Mg(2+). Position 44 (E44) interacts with K(+). The L-methionine site is built by E57 and Q100. The flexible loop stretch occupies residues 100–110 (QSPDIAQGVDR). Residues 167 to 169 (DAK), 233 to 234 (RF), D242, 248 to 249 (RK), A265, and K269 contribute to the ATP site. D242 is an L-methionine binding site. Position 273 (K273) interacts with L-methionine.

Belongs to the AdoMet synthase family. In terms of assembly, homotetramer; dimer of dimers. Mg(2+) serves as cofactor. K(+) is required as a cofactor.

The protein resides in the cytoplasm. It carries out the reaction L-methionine + ATP + H2O = S-adenosyl-L-methionine + phosphate + diphosphate. It functions in the pathway amino-acid biosynthesis; S-adenosyl-L-methionine biosynthesis; S-adenosyl-L-methionine from L-methionine: step 1/1. Functionally, catalyzes the formation of S-adenosylmethionine (AdoMet) from methionine and ATP. The overall synthetic reaction is composed of two sequential steps, AdoMet formation and the subsequent tripolyphosphate hydrolysis which occurs prior to release of AdoMet from the enzyme. The sequence is that of S-adenosylmethionine synthase from Paraburkholderia phymatum (strain DSM 17167 / CIP 108236 / LMG 21445 / STM815) (Burkholderia phymatum).